We begin with the raw amino-acid sequence, 501 residues long: 5-beta-cholestane-3-alpha,7-alpha-diol 12-alpha-hydroxylase (501 aa).

Residues methionine 1–leucine 21 form a helical membrane-spanning segment. Residue serine 326 is modified to Phosphoserine. Residue cysteine 440 participates in heme binding.

This sequence belongs to the cytochrome P450 family. The cofactor is heme.

Its subcellular location is the endoplasmic reticulum membrane. The protein resides in the microsome membrane. The catalysed reaction is 7alpha-hydroxycholest-4-en-3-one + reduced [NADPH--hemoprotein reductase] + O2 = 7alpha,12alpha-dihydroxycholest-4-en-3-one + oxidized [NADPH--hemoprotein reductase] + H2O + H(+). The enzyme catalyses 5beta-cholestane-3alpha,7alpha-diol + reduced [NADPH--hemoprotein reductase] + O2 = 5beta-cholestane-3alpha,7alpha,12alpha-triol + oxidized [NADPH--hemoprotein reductase] + H2O + H(+). It carries out the reaction chenodeoxycholate + reduced [NADPH--hemoprotein reductase] + O2 = cholate + oxidized [NADPH--hemoprotein reductase] + H2O + H(+). The protein operates within lipid metabolism; bile acid biosynthesis. Functionally, a cytochrome P450 monooxygenase involved in primary bile acid biosynthesis. Catalyzes the 12alpha-hydroxylation of 7alpha-hydroxy-4-cholesten-3-one, an intermediate metabolite in cholic acid biosynthesis. Controls biliary balance of cholic acid and chenodeoxycholic acid, ultimately regulating the intestinal absorption of dietary lipids. Mechanistically, uses molecular oxygen inserting one oxygen atom into a substrate, and reducing the second into a water molecule, with two electrons provided by NADPH via cytochrome P450 reductase (CPR; NADPH--hemoprotein reductase). The polypeptide is 5-beta-cholestane-3-alpha,7-alpha-diol 12-alpha-hydroxylase (CYP8B1) (Sus scrofa (Pig)).